The chain runs to 309 residues: Protein FdhE homolog (309 aa).

The protein belongs to the FdhE family.

It localises to the cytoplasm. Necessary for formate dehydrogenase activity. This is Protein FdhE homolog from Yersinia pestis bv. Antiqua (strain Antiqua).